The primary structure comprises 462 residues: Glycoprotein endo-alpha-1,2-mannosidase (462 aa).

At 1 to 9 (MAKFRRRTC) the chain is on the cytoplasmic side. Residues 10-30 (ILLSLFILFIFSLMMGLKMLW) form a helical; Signal-anchor for type II membrane protein membrane-spanning segment. Residues 31–462 (PNAASFGPPF…YALDQQQPAS (432 aa)) are Lumenal-facing. The segment at 60-462 (DFQRSDRINM…YALDQQQPAS (403 aa)) is catalytic.

It belongs to the glycosyl hydrolase 99 family. In terms of processing, undergoes proteolytic cleavage in the C-terminal region.

The protein resides in the golgi apparatus membrane. It carries out the reaction N-{alpha-Glc-(1-&gt;3)-alpha-Man-(1-&gt;2)-alpha-Man-(1-&gt;2)-alpha-Man-(1-&gt;3)-[alpha-Man-(1-&gt;2)-alpha-Man-(1-&gt;3)-[alpha-Man-(1-&gt;2)-alpha-Man-(1-&gt;6)]-alpha-Man-(1-&gt;6)]-beta-Man-(1-&gt;4)-beta-GlcNAc-(1-&gt;4)-beta-GlcNAc}-L-asparaginyl-[protein] + H2O = alpha-D-glucosyl-(1-&gt;3)-D-mannopyranose + N(4)-{alpha-D-Man-(1-&gt;2)-alpha-D-Man-(1-&gt;3)-[alpha-D-Man-(1-&gt;2)-alpha-D-Man-(1-&gt;3)-[alpha-D-Man-(1-&gt;2)-alpha-D-Man-(1-&gt;6)]-alpha-D-Man-(1-&gt;6)]-beta-D-Man-(1-&gt;4)-beta-D-GlaNAc-(1-&gt;4)-beta-D-GlcNAc}-L-asparaginyl-[protein] (N-glucan mannose isomer 8A1,2,3B1,2). In Mus musculus (Mouse), this protein is Glycoprotein endo-alpha-1,2-mannosidase (Manea).